A 418-amino-acid chain; its full sequence is EQQRYLNAKKYVKLVLVADYIMYLKYGRSLTTLRTRMYDIVNIINLIFQRMNIHVALVGLEIWSNRDKIIVQSSADVTLDLFAKWRETDLLKRKSHDNAQLLTGINFNGPTAGLAYLSGICKPMYSAGIVQDHNKVHHLVAIAMAHEMGHNLGMDHDKDTCTCGARSCVMAGTLSCEPSYLFSDCSRRGHRAFLIKDMPQCILEKPLRTDVVSPPVCGNYFVEVGEECDCGSPATCRDTCCDAATCKLRQGAQCAEGLCCDQCRFKGAGTECRAAKDECDMADLCTGRSAECTDRFQRNGQPCQNNNGYCYNGTCPIMRDQCIALFGPNAAVSQDACFQFNLQGNHYGYCRKEQNTKIACEPQDVKCGRLYCFPSSPATKNPCNIHYSPNDEDKGMVLPGTKCADGKACSNGRCVDVT.

In terms of domain architecture, Peptidase M12B spans 10-206 (KYVKLVLVAD…DMPQCILEKP (197 aa)). 3 disulfide bridges follow: Cys121/Cys201, Cys161/Cys185, and Cys163/Cys168. His146 serves as a coordination point for Zn(2+). Residue Glu147 is part of the active site. Zn(2+) is bound by residues His150 and His156. The Disintegrin domain maps to 214-299 (PPVCGNYFVE…AECTDRFQRN (86 aa)). Ca(2+)-binding residues include Val216, Asn219, Phe221, Glu223, Glu226, and Asp229. 14 cysteine pairs are disulfide-bonded: Cys217–Cys246, Cys228–Cys241, Cys230–Cys236, Cys240–Cys263, Cys254–Cys260, Cys259–Cys285, Cys272–Cys292, Cys279–Cys310, Cys303–Cys315, Cys322–Cys372, Cys337–Cys383, Cys350–Cys360, Cys367–Cys409, and Cys403–Cys414. The short motif at 278 to 280 (ECD) is the D/ECD-tripeptide element. Residues Asp280, Met281, Asp283, Asp294, and Arg295 each contribute to the Ca(2+) site. Residue Asn312 is glycosylated (N-linked (GlcNAc...) asparagine).

This sequence belongs to the venom metalloproteinase (M12B) family. P-III subfamily. P-IIIc sub-subfamily. Homodimer; disulfide-linked. Requires Zn(2+) as cofactor. In terms of tissue distribution, expressed by the venom gland.

The protein resides in the secreted. In terms of biological role, snake venom zinc metalloprotease that induces apoptosis in vascular endothelial cells (VEC), without degrading the extracellular matrix (it cannot cleave collagen) or inhibiting adhesion of VEC. Has also fibrinogenolytic and hemorrhagic activities. The sequence is that of Zinc metalloproteinase-disintegrin-like batroxstatin-2 from Bothrops atrox (Barba amarilla).